Reading from the N-terminus, the 241-residue chain is Probable GTP-binding protein EngB (241 aa).

The EngB-type G domain maps to 56–240 (GPVEIAFAGR…RAAIALLLKE (185 aa)). Residues 64–71 (GRSNVGKS), 91–95 (GRTQE), 118–121 (DMPG), 185–188 (TKID), and 219–221 (TSS) each bind GTP. Mg(2+) is bound by residues Ser71 and Thr93.

This sequence belongs to the TRAFAC class TrmE-Era-EngA-EngB-Septin-like GTPase superfamily. EngB GTPase family. Requires Mg(2+) as cofactor.

Functionally, necessary for normal cell division and for the maintenance of normal septation. The polypeptide is Probable GTP-binding protein EngB (Brucella suis biovar 1 (strain 1330)).